The following is a 140-amino-acid chain: ATP synthase epsilon chain (140 aa).

Belongs to the ATPase epsilon chain family. In terms of assembly, F-type ATPases have 2 components, CF(1) - the catalytic core - and CF(0) - the membrane proton channel. CF(1) has five subunits: alpha(3), beta(3), gamma(1), delta(1), epsilon(1). CF(0) has three main subunits: a, b and c.

The protein localises to the cell inner membrane. Functionally, produces ATP from ADP in the presence of a proton gradient across the membrane. The chain is ATP synthase epsilon chain from Stenotrophomonas maltophilia (strain R551-3).